A 268-amino-acid chain; its full sequence is MVLTKRIIPCLDLKDGRVVKGTHFVDLRDAGDPVELAERYNEQGADEVVFLDITASKEQRGAILSVISRAADQLFLPLTVGGGIRTIDDIQQLLRAGADKVSINTSAIKDPSLISDGAVRFGNQCIVVAVDVRRSTAANPDATVIHLPDGTTCWYEVVIYGGSTPTGIDAVRWVQDAEERGAGEILLTSMETDGTKNGFDLAITAAVSDAVSIPVIASGGVGTLADFYDGVTAGKADACLAASVFHYGEFTVRDVKTYLAGRGVPVRL.

Catalysis depends on residues aspartate 12 and aspartate 131.

Belongs to the HisA/HisF family. Heterodimer of HisH and HisF.

The protein resides in the cytoplasm. The catalysed reaction is 5-[(5-phospho-1-deoxy-D-ribulos-1-ylimino)methylamino]-1-(5-phospho-beta-D-ribosyl)imidazole-4-carboxamide + L-glutamine = D-erythro-1-(imidazol-4-yl)glycerol 3-phosphate + 5-amino-1-(5-phospho-beta-D-ribosyl)imidazole-4-carboxamide + L-glutamate + H(+). Its pathway is amino-acid biosynthesis; L-histidine biosynthesis; L-histidine from 5-phospho-alpha-D-ribose 1-diphosphate: step 5/9. IGPS catalyzes the conversion of PRFAR and glutamine to IGP, AICAR and glutamate. The HisF subunit catalyzes the cyclization activity that produces IGP and AICAR from PRFAR using the ammonia provided by the HisH subunit. This is Imidazole glycerol phosphate synthase subunit HisF from Methanosphaerula palustris (strain ATCC BAA-1556 / DSM 19958 / E1-9c).